A 286-amino-acid polypeptide reads, in one-letter code: Phosphatidylserine decarboxylase proenzyme (286 aa).

Active-site charge relay system; for autoendoproteolytic cleavage activity residues include aspartate 90, histidine 147, and serine 250. Serine 250 (schiff-base intermediate with substrate; via pyruvic acid; for decarboxylase activity) is an active-site residue. Serine 250 is modified (pyruvic acid (Ser); by autocatalysis).

The protein belongs to the phosphatidylserine decarboxylase family. PSD-B subfamily. Prokaryotic type I sub-subfamily. Heterodimer of a large membrane-associated beta subunit and a small pyruvoyl-containing alpha subunit. Pyruvate serves as cofactor. In terms of processing, is synthesized initially as an inactive proenzyme. Formation of the active enzyme involves a self-maturation process in which the active site pyruvoyl group is generated from an internal serine residue via an autocatalytic post-translational modification. Two non-identical subunits are generated from the proenzyme in this reaction, and the pyruvate is formed at the N-terminus of the alpha chain, which is derived from the carboxyl end of the proenzyme. The autoendoproteolytic cleavage occurs by a canonical serine protease mechanism, in which the side chain hydroxyl group of the serine supplies its oxygen atom to form the C-terminus of the beta chain, while the remainder of the serine residue undergoes an oxidative deamination to produce ammonia and the pyruvoyl prosthetic group on the alpha chain. During this reaction, the Ser that is part of the protease active site of the proenzyme becomes the pyruvoyl prosthetic group, which constitutes an essential element of the active site of the mature decarboxylase.

It localises to the cell membrane. The enzyme catalyses a 1,2-diacyl-sn-glycero-3-phospho-L-serine + H(+) = a 1,2-diacyl-sn-glycero-3-phosphoethanolamine + CO2. The protein operates within phospholipid metabolism; phosphatidylethanolamine biosynthesis; phosphatidylethanolamine from CDP-diacylglycerol: step 2/2. Functionally, catalyzes the formation of phosphatidylethanolamine (PtdEtn) from phosphatidylserine (PtdSer). The sequence is that of Phosphatidylserine decarboxylase proenzyme from Psychromonas ingrahamii (strain DSM 17664 / CCUG 51855 / 37).